The primary structure comprises 261 residues: Triosephosphate isomerase (261 aa).

10-12 provides a ligand contact to substrate; that stretch reads NWK. Histidine 100 acts as the Electrophile in catalysis. The Proton acceptor role is filled by glutamate 172. Residues glycine 178, serine 218, and 239 to 240 each bind substrate; that span reads GG.

The protein belongs to the triosephosphate isomerase family. In terms of assembly, homodimer.

Its subcellular location is the cytoplasm. It carries out the reaction D-glyceraldehyde 3-phosphate = dihydroxyacetone phosphate. It participates in carbohydrate biosynthesis; gluconeogenesis. Its pathway is carbohydrate degradation; glycolysis; D-glyceraldehyde 3-phosphate from glycerone phosphate: step 1/1. Functionally, involved in the gluconeogenesis. Catalyzes stereospecifically the conversion of dihydroxyacetone phosphate (DHAP) to D-glyceraldehyde-3-phosphate (G3P). This is Triosephosphate isomerase from Rhodococcus jostii (strain RHA1).